The following is a 414-amino-acid chain: Serine--tRNA ligase (414 aa).

230–232 (TAE) is an L-serine binding site. 261-263 (RKE) contributes to the ATP binding site. Glu284 contributes to the L-serine binding site. 348–351 (EISS) lines the ATP pocket. Ser382 lines the L-serine pocket.

The protein belongs to the class-II aminoacyl-tRNA synthetase family. Type-1 seryl-tRNA synthetase subfamily. As to quaternary structure, homodimer. The tRNA molecule binds across the dimer.

The protein localises to the cytoplasm. It catalyses the reaction tRNA(Ser) + L-serine + ATP = L-seryl-tRNA(Ser) + AMP + diphosphate + H(+). The enzyme catalyses tRNA(Sec) + L-serine + ATP = L-seryl-tRNA(Sec) + AMP + diphosphate + H(+). The protein operates within aminoacyl-tRNA biosynthesis; selenocysteinyl-tRNA(Sec) biosynthesis; L-seryl-tRNA(Sec) from L-serine and tRNA(Sec): step 1/1. Catalyzes the attachment of serine to tRNA(Ser). Is also able to aminoacylate tRNA(Sec) with serine, to form the misacylated tRNA L-seryl-tRNA(Sec), which will be further converted into selenocysteinyl-tRNA(Sec). This chain is Serine--tRNA ligase, found in Nitratiruptor sp. (strain SB155-2).